Reading from the N-terminus, the 363-residue chain is G-protein coupled receptor 6 (363 aa).

The Extracellular segment spans residues 1-75 (MNASAAALNE…SGLLLSAVNP (75 aa)). N-linked (GlcNAc...) asparagine glycans are attached at residues Asn-2 and Asn-9. The tract at residues 29-48 (GAPDTGEWGPPAASAALGGG) is disordered. Asn-52 carries N-linked (GlcNAc...) asparagine glycosylation. Residues 76–95 (WDVLLCVSGTVIAGENALVV) form a helical membrane-spanning segment. At 96 to 107 (ALIASTPALRTP) the chain is on the cytoplasmic side. The chain crosses the membrane as a helical span at residues 108–131 (MFVLVGSLATADLLAGCGLILHFV). Over 132 to 143 (FQYVVPSETVSL) the chain is Extracellular. Residues 144–165 (LMVGFLVASFAASVSSLLAITV) form a helical membrane-spanning segment. Over 166–186 (DRYLSLYNALTYYSRRTLLGV) the chain is Cytoplasmic. A helical membrane pass occupies residues 187–206 (HLLLAATWTVSLGLGLLPVL). Residues 207 to 231 (GWNCLADRTSCSVVRPLTRSHVALL) are Extracellular-facing. A helical transmembrane segment spans residues 232–250 (STSFFVVFGIMLHLYVRIC). The Cytoplasmic segment spans residues 251 to 278 (QVVWRHAHQIALQQHCLAPPHLAATRKG). The chain crosses the membrane as a helical span at residues 279 to 305 (VGTLAVVLGTFGASWLPFAIYCVVGSQ). Residues 306 to 310 (EDPAI) lie on the Extracellular side of the membrane. A helical membrane pass occupies residues 311–332 (YTYATLLPATYNSMINPIIYAF). Residues 333-363 (RNQEIQRALWLLFCGCFQSKVPFRSRSPSEV) are Cytoplasmic-facing. Cys-346 is lipidated: S-palmitoyl cysteine. 3 positions are modified to phosphoserine: Ser-357, Ser-359, and Ser-361.

It belongs to the G-protein coupled receptor 1 family. As to expression, mainly expressed in the brain. Selectively expressed in striatopallidal neurons in the striatum.

It localises to the cell membrane. In terms of biological role, orphan receptor with constitutive G(s) signaling activity that activate cyclic AMP. Promotes neurite outgrowth and blocks myelin inhibition in neurons. This Mus musculus (Mouse) protein is G-protein coupled receptor 6 (Gpr6).